A 302-amino-acid polypeptide reads, in one-letter code: UDP-3-O-acyl-N-acetylglucosamine deacetylase (302 aa).

Positions 82, 238, and 242 each coordinate Zn(2+). H265 acts as the Proton donor in catalysis.

The protein belongs to the LpxC family. Zn(2+) is required as a cofactor.

The catalysed reaction is a UDP-3-O-[(3R)-3-hydroxyacyl]-N-acetyl-alpha-D-glucosamine + H2O = a UDP-3-O-[(3R)-3-hydroxyacyl]-alpha-D-glucosamine + acetate. The protein operates within glycolipid biosynthesis; lipid IV(A) biosynthesis; lipid IV(A) from (3R)-3-hydroxytetradecanoyl-[acyl-carrier-protein] and UDP-N-acetyl-alpha-D-glucosamine: step 2/6. In terms of biological role, catalyzes the hydrolysis of UDP-3-O-myristoyl-N-acetylglucosamine to form UDP-3-O-myristoylglucosamine and acetate, the committed step in lipid A biosynthesis. This chain is UDP-3-O-acyl-N-acetylglucosamine deacetylase, found in Leptospira biflexa serovar Patoc (strain Patoc 1 / Ames).